The primary structure comprises 512 residues: Sucrose-6-phosphate hydrolase (512 aa).

Substrate-binding positions include 40-43 (WMND), Gln59, Trp67, 102-103 (FS), 165-166 (RD), Glu229, and Trp311. The active site involves Asp43.

Belongs to the glycosyl hydrolase 32 family.

It localises to the cytoplasm. The catalysed reaction is Hydrolysis of terminal non-reducing beta-D-fructofuranoside residues in beta-D-fructofuranosides.. The protein operates within glycan biosynthesis; sucrose metabolism. The chain is Sucrose-6-phosphate hydrolase (sacA) from Zymomonas mobilis subsp. mobilis (strain ATCC 31821 / ZM4 / CP4).